The primary structure comprises 100 residues: uncharacterized protein (100 aa).

This is an uncharacterized protein from Clostridium tetanomorphum.